Consider the following 505-residue polypeptide: Deoxyguanosinetriphosphate triphosphohydrolase (505 aa).

One can recognise an HD domain in the interval 66–273; the sequence is RLTHSMEVQQ…MEAADDISYC (208 aa).

Belongs to the dGTPase family. Type 1 subfamily. As to quaternary structure, homotetramer. The cofactor is Mg(2+).

The catalysed reaction is dGTP + H2O = 2'-deoxyguanosine + triphosphate + H(+). In terms of biological role, dGTPase preferentially hydrolyzes dGTP over the other canonical NTPs. This chain is Deoxyguanosinetriphosphate triphosphohydrolase, found in Shigella boydii serotype 4 (strain Sb227).